Consider the following 94-residue polypeptide: uncharacterized protein (94 aa).

An N-terminal signal peptide occupies residues 1-25; it reads MRAAIAVLFIALVGLATYHLVMSQA.

This is an uncharacterized protein from Archaeoglobus fulgidus (strain ATCC 49558 / DSM 4304 / JCM 9628 / NBRC 100126 / VC-16).